We begin with the raw amino-acid sequence, 142 residues long: ATP synthase epsilon chain (142 aa).

This sequence belongs to the ATPase epsilon chain family. In terms of assembly, F-type ATPases have 2 components, CF(1) - the catalytic core - and CF(0) - the membrane proton channel. CF(1) has five subunits: alpha(3), beta(3), gamma(1), delta(1), epsilon(1). CF(0) has three main subunits: a, b and c.

It is found in the cell inner membrane. Functionally, produces ATP from ADP in the presence of a proton gradient across the membrane. The polypeptide is ATP synthase epsilon chain (Shewanella pealeana (strain ATCC 700345 / ANG-SQ1)).